Consider the following 444-residue polypeptide: Phosphoglucosamine mutase (444 aa).

The active-site Phosphoserine intermediate is Ser-103. 4 residues coordinate Mg(2+): Ser-103, Asp-241, Asp-243, and Asp-245. Ser-103 carries the post-translational modification Phosphoserine.

It belongs to the phosphohexose mutase family. It depends on Mg(2+) as a cofactor. In terms of processing, activated by phosphorylation.

The catalysed reaction is alpha-D-glucosamine 1-phosphate = D-glucosamine 6-phosphate. In terms of biological role, catalyzes the conversion of glucosamine-6-phosphate to glucosamine-1-phosphate. The polypeptide is Phosphoglucosamine mutase (Deinococcus geothermalis (strain DSM 11300 / CIP 105573 / AG-3a)).